A 309-amino-acid polypeptide reads, in one-letter code: Elongation factor Ts (309 aa).

The segment at 82 to 85 (TDFV) is involved in Mg(2+) ion dislocation from EF-Tu.

Belongs to the EF-Ts family.

It localises to the cytoplasm. Its function is as follows. Associates with the EF-Tu.GDP complex and induces the exchange of GDP to GTP. It remains bound to the aminoacyl-tRNA.EF-Tu.GTP complex up to the GTP hydrolysis stage on the ribosome. The chain is Elongation factor Ts from Rickettsia africae (strain ESF-5).